We begin with the raw amino-acid sequence, 78 residues long: Large ribosomal subunit protein bL28 (78 aa).

The span at 1-20 shows a compositional bias: polar residues; that stretch reads MSRVCQLTGTRANNGMSVSH. Positions 1-23 are disordered; that stretch reads MSRVCQLTGTRANNGMSVSHSHI.

The protein belongs to the bacterial ribosomal protein bL28 family.

In Prochlorococcus marinus (strain NATL2A), this protein is Large ribosomal subunit protein bL28.